A 127-amino-acid chain; its full sequence is MSANKLKVSVISPEKILYKGEVDSLIVPGSEGFFGILPNHAPLVATLGIGILEIRKGEKLKVLSVEGGFVEIKDNSISILTDHGALKEDIDLEVEKKNLAEAEKLPPSDSKNLFLQKTKTRILVASR.

The protein belongs to the ATPase epsilon chain family. F-type ATPases have 2 components, CF(1) - the catalytic core - and CF(0) - the membrane proton channel. CF(1) has five subunits: alpha(3), beta(3), gamma(1), delta(1), epsilon(1). CF(0) has three main subunits: a, b and c.

The protein resides in the cell inner membrane. Its function is as follows. Produces ATP from ADP in the presence of a proton gradient across the membrane. This chain is ATP synthase epsilon chain, found in Leptospira interrogans serogroup Icterohaemorrhagiae serovar copenhageni (strain Fiocruz L1-130).